Consider the following 950-residue polypeptide: Valine--tRNA ligase, mitochondrial (950 aa).

A mitochondrion-targeting transit peptide spans 1–90 (MFHFQRSFSS…ITIQDALARF (90 aa)). The short motif at 67-77 (PNITGKLHIGH) is the 'HIGH' region element. The 'KMSKS' region signature appears at 556-560 (KMSKS). K559 lines the ATP pocket.

The protein belongs to the class-I aminoacyl-tRNA synthetase family.

The protein resides in the mitochondrion. The catalysed reaction is tRNA(Val) + L-valine + ATP = L-valyl-tRNA(Val) + AMP + diphosphate. The protein is Valine--tRNA ligase, mitochondrial (vas1) of Schizosaccharomyces pombe (strain 972 / ATCC 24843) (Fission yeast).